A 761-amino-acid polypeptide reads, in one-letter code: Coenzyme PQQ synthesis protein F (761 aa).

Zn(2+) is bound at residue histidine 49. Catalysis depends on glutamate 52, which acts as the Proton acceptor. Positions 53 and 130 each coordinate Zn(2+).

This sequence belongs to the peptidase M16 family. Zn(2+) is required as a cofactor.

Its pathway is cofactor biosynthesis; pyrroloquinoline quinone biosynthesis. In terms of biological role, required for coenzyme pyrroloquinoline quinone (PQQ) biosynthesis. It is thought that this protein is a protease that cleaves peptides bond in a small peptide (gene pqqA), providing the glutamate and tyrosine residues which are necessary for the synthesis of PQQ. This chain is Coenzyme PQQ synthesis protein F (pqqF), found in Klebsiella pneumoniae.